The chain runs to 570 residues: Sulfite reductase [NADPH] hemoprotein beta-component (570 aa).

Positions 434, 440, 479, and 483 each coordinate [4Fe-4S] cluster. A siroheme-binding site is contributed by cysteine 483.

The protein belongs to the nitrite and sulfite reductase 4Fe-4S domain family. As to quaternary structure, alpha(8)-beta(8). The alpha component is a flavoprotein, the beta component is a hemoprotein. Requires siroheme as cofactor. [4Fe-4S] cluster is required as a cofactor.

It carries out the reaction hydrogen sulfide + 3 NADP(+) + 3 H2O = sulfite + 3 NADPH + 4 H(+). Its pathway is sulfur metabolism; hydrogen sulfide biosynthesis; hydrogen sulfide from sulfite (NADPH route): step 1/1. Component of the sulfite reductase complex that catalyzes the 6-electron reduction of sulfite to sulfide. This is one of several activities required for the biosynthesis of L-cysteine from sulfate. The chain is Sulfite reductase [NADPH] hemoprotein beta-component (cysI) from Escherichia coli (strain K12).